A 311-amino-acid polypeptide reads, in one-letter code: tRNA-cytidine(32) 2-sulfurtransferase (311 aa).

A PP-loop motif motif is present at residues 45–50; that stretch reads SGGKDS. Cys120, Cys123, and Cys211 together coordinate [4Fe-4S] cluster.

This sequence belongs to the TtcA family. As to quaternary structure, homodimer. It depends on Mg(2+) as a cofactor. [4Fe-4S] cluster is required as a cofactor.

It localises to the cytoplasm. The enzyme catalyses cytidine(32) in tRNA + S-sulfanyl-L-cysteinyl-[cysteine desulfurase] + AH2 + ATP = 2-thiocytidine(32) in tRNA + L-cysteinyl-[cysteine desulfurase] + A + AMP + diphosphate + H(+). It functions in the pathway tRNA modification. Catalyzes the ATP-dependent 2-thiolation of cytidine in position 32 of tRNA, to form 2-thiocytidine (s(2)C32). The sulfur atoms are provided by the cysteine/cysteine desulfurase (IscS) system. In Shewanella halifaxensis (strain HAW-EB4), this protein is tRNA-cytidine(32) 2-sulfurtransferase.